The chain runs to 132 residues: MVMTDPIADFLTRVRNANTVYHDKVEAPASNVKKAIAEILKQEGYIKDYESVEDGKQGIIRLYLKYGANKQRVITGLKRISKPGLRVYAKKDQIPRVLGGLGIAIVSTSKGIMTDKQARQSGLGGEVICYVW.

This sequence belongs to the universal ribosomal protein uS8 family. Part of the 30S ribosomal subunit. Contacts proteins S5 and S12.

Functionally, one of the primary rRNA binding proteins, it binds directly to 16S rRNA central domain where it helps coordinate assembly of the platform of the 30S subunit. This chain is Small ribosomal subunit protein uS8, found in Desulforamulus reducens (strain ATCC BAA-1160 / DSM 100696 / MI-1) (Desulfotomaculum reducens).